The primary structure comprises 539 residues: Glutathione synthetase, chloroplastic (539 aa).

A chloroplast-targeting transit peptide spans 1–61 (MGSGCSSLSY…SPLRCGRSFK (61 aa)). Substrate is bound at residue R193. Position 209 (E209) interacts with ATP. Residues E209 and N211 each coordinate Mg(2+). Residues 213–216 (ISCS), 281–283 (ERN), Q287, and 335–338 (RSGY) contribute to the substrate site. ATP is bound by residues K374, 428-437 (KPQREGGGNN), Y439, 464-467 (MQRI), and E490. Position 432 (E432) interacts with Mg(2+). R515 provides a ligand contact to substrate. Positions 517 and 523 each coordinate ATP. Residue 526–527 (VA) participates in substrate binding.

It belongs to the eukaryotic GSH synthase family. In terms of assembly, homodimer. The cofactor is Mg(2+).

It localises to the plastid. The protein localises to the chloroplast. The enzyme catalyses gamma-L-glutamyl-L-cysteine + glycine + ATP = glutathione + ADP + phosphate + H(+). It participates in sulfur metabolism; glutathione biosynthesis; glutathione from L-cysteine and L-glutamate: step 2/2. The protein is Glutathione synthetase, chloroplastic (GSH2) of Arabidopsis thaliana (Mouse-ear cress).